Reading from the N-terminus, the 171-residue chain is uncharacterized protein (171 aa).

Disordered regions lie at residues 1-50 and 71-91; these read MSHR…THLS and RIDK…PMMK.

This is an uncharacterized protein from Caenorhabditis elegans.